Consider the following 518-residue polypeptide: Pre-glycoprotein polyprotein GP complex (518 aa).

The N-myristoyl glycine; by host moiety is linked to residue G2. Residues 2–17 (GQVIGFFQSLPNIINE) lie on the Extracellular side of the membrane. Residues 18–33 (ALNIALICVALIAILK) traverse the membrane as a helical segment. The Cytoplasmic segment spans residues 34 to 58 (GIVNIWKSGLIQLFIFLILAGRSCS). A Zn(2+)-binding site is contributed by C57. The Extracellular portion of the chain corresponds to 59–456 (HTFQIGRNHE…QGSTPLSLVD (398 aa)). Disulfide bonds link C87-C258, C303-C316, C325-C334, and C388-C409. 5 N-linked (GlcNAc...) asparagine; by host glycosylation sites follow: N90, N112, N127, N180, and N251. N-linked (GlcNAc...) asparagine; by host glycans are attached at residues N389, N397, N414, and N419. A helical membrane pass occupies residues 457-477 (LCFWSTLFYVTTLFAHLVGFP). The Cytoplasmic segment spans residues 478–518 (THRHILDGPCPKPHRLTKKGICSCGHFGIPGKPVRWVKRSR). Zn(2+) contacts are provided by H479, H481, C487, H491, C499, and C501.

This sequence belongs to the arenaviridae GPC protein family. As to quaternary structure, interacts with glycoprotein G2. Part of the GP complex (GP-C) together with glycoprotein G1 and glycoprotein G2. The GP-complex interacts with protein Z, which interacts with ribonucleocapsid; these interactions may induce virion budding. Homotrimer; disulfide-linked. In pre-fusion state, G1 homotrimers bind G2 homotrimers via ionic interactions. Part of the GP complex (GP-C) together with glycoprotein G2 and the stable signal peptide. The GP-complex interacts with protein Z, which interacts with ribonucleocapsid; these interactions may induce virion budding. In terms of assembly, homotrimer. Interacts with the stable signal peptide. In pre-fusion state, G2 homotrimers bind G1 homotrimers via ionic interactions. Part of the GP complex (GP-C) together with glycoprotein G1 and the stable signal peptide. Acidification in the endosome triggers rearrangements, which ultimately leads to a 6 helix bundle formed by the two heptad repeat domains (HR1 and HR2) in post-fusion state. The GP-complex interacts with protein Z, which interacts with ribonucleocapsid; these interactions may induce virion budding. In terms of processing, specific enzymatic cleavages in vivo yield mature proteins. GP-C polyprotein is cleaved in the endoplasmic reticulum by the host protease MBTPS1. Only cleaved glycoprotein is incorporated into virions. Post-translationally, the SSP remains stably associated with the GP complex following cleavage by signal peptidase and plays crucial roles in the trafficking of GP through the secretory pathway. Myristoylation is necessary for GP2-mediated fusion activity.

The protein localises to the virion membrane. Its subcellular location is the host endoplasmic reticulum membrane. It localises to the host Golgi apparatus membrane. The protein resides in the host cell membrane. Functionally, functions as a cleaved signal peptide that is retained as the third component of the GP complex (GP-C). Helps to stabilize the spike complex in its native conformation. The SSP is required for efficient glycoprotein expression, post-translational maturation cleavage of G1 and G2, glycoprotein transport to the cell surface plasma membrane, formation of infectious virus particles, and acid pH-dependent glycoprotein-mediated cell fusion. Forms the virion spikes together with glycoprotein G2. The glycoprotein spike trimers are connected to the underlying matrix. Mediates virus attachment to host receptor alpha-dystroglycan DAG1. This attachment induces virion internalization predominantly through clathrin- and caveolin-independent endocytosis. In terms of biological role, forms the virion spikes together with glycoprotein G1. The glycoprotein spike trimers are connected to the underlying matrix. Class I viral fusion protein that directs fusion of viral and host endosomal membranes, leading to delivery of the nucleocapsid into the cytoplasm. Membrane fusion is mediated by irreversible conformational changes induced by acidification. The chain is Pre-glycoprotein polyprotein GP complex from Bolomys (OLVV).